A 158-amino-acid polypeptide reads, in one-letter code: D-aminoacyl-tRNA deacylase (158 aa).

The short motif at 138-139 (GP) is the Gly-cisPro motif, important for rejection of L-amino acids element.

Belongs to the DTD family. As to quaternary structure, homodimer.

It is found in the cytoplasm. It carries out the reaction glycyl-tRNA(Ala) + H2O = tRNA(Ala) + glycine + H(+). The enzyme catalyses a D-aminoacyl-tRNA + H2O = a tRNA + a D-alpha-amino acid + H(+). An aminoacyl-tRNA editing enzyme that deacylates mischarged D-aminoacyl-tRNAs. Hydrolyzes correctly charged, achiral, glycyl-tRNA(Gly). Deacylates mischarged endogenous and E.coli glycyl-tRNA(Ala), protecting cells against glycine mischarging by AlaRS. Acts via tRNA-based rather than protein-based catalysis; rejects L-amino acids rather than detecting D-amino acids in the active site. By recycling D-aminoacyl-tRNA to D-amino acids and free tRNA molecules, this enzyme counteracts the toxicity associated with the formation of D-aminoacyl-tRNA entities in vivo and helps enforce protein L-homochirality. The protein is D-aminoacyl-tRNA deacylase of Drosophila melanogaster (Fruit fly).